A 124-amino-acid chain; its full sequence is Small ribosomal subunit protein uS12 (124 aa).

Residues 1–22 form a disordered region; the sequence is MATINQLVRKPRSRKVAKSDVP. Asp-89 bears the 3-methylthioaspartic acid mark. Positions 104–124 are disordered; sequence TAGVNDRRQGRSKYGAKRGKS. Positions 113–124 are enriched in basic residues; it reads GRSKYGAKRGKS.

This sequence belongs to the universal ribosomal protein uS12 family. In terms of assembly, part of the 30S ribosomal subunit. Contacts proteins S8 and S17. May interact with IF1 in the 30S initiation complex.

Functionally, with S4 and S5 plays an important role in translational accuracy. Its function is as follows. Interacts with and stabilizes bases of the 16S rRNA that are involved in tRNA selection in the A site and with the mRNA backbone. Located at the interface of the 30S and 50S subunits, it traverses the body of the 30S subunit contacting proteins on the other side and probably holding the rRNA structure together. The combined cluster of proteins S8, S12 and S17 appears to hold together the shoulder and platform of the 30S subunit. This is Small ribosomal subunit protein uS12 from Hahella chejuensis (strain KCTC 2396).